The following is a 445-amino-acid chain: MANVVVIGAQWGDEGKGKITDLLSKSADVVVRYQGGVNAGHTVVVNGQTLKLHLIPSGILYPDTECIIGSGTVIDPEVLIQELDQLKLLGVSTANLLISETAHVTMPYHRLIDRAAEELRGSHRIGTTGRGIGPTYADKSERTGIRILDLMDATTLQEQLRWAVNHKNVLLEKMYGLPPYDPAEIIAEYLTYAERLRPHVVDCSLKISDAVRRRRNILFEGAQGTLLDLDHGTYPYVTSSNPVAGGACVGAGVGPTMIDRVIGVAKAYTTRVGEGPFPTELTDQLGELLCDRGAEFGTTTGRKRRCGWFDAVIGRYAVRINGLDCLAITKLDVLDQLDEIKVCVAYEIDGERCEDFPNARRFARCQPIYETLPGWKQPTDHCRSLEDLPPQALNYLKFLAEIMEVPIAIVSLGAERHQTIIVEDPIHGPKRALLPASPVPVPKIA.

Residues 12–18 (GDEGKGK) and 40–42 (GHT) contribute to the GTP site. Aspartate 13 acts as the Proton acceptor in catalysis. Aspartate 13 and glycine 40 together coordinate Mg(2+). IMP contacts are provided by residues 13–16 (DEGK), 38–41 (NAGH), threonine 128, arginine 142, glutamine 223, threonine 238, and arginine 302. Histidine 41 acts as the Proton donor in catalysis. A substrate-binding site is contributed by 298-304 (TTTGRKR). GTP is bound by residues arginine 304, 330–332 (KLD), and 411–413 (SLG).

Belongs to the adenylosuccinate synthetase family. In terms of assembly, homodimer. Requires Mg(2+) as cofactor.

Its subcellular location is the cytoplasm. The enzyme catalyses IMP + L-aspartate + GTP = N(6)-(1,2-dicarboxyethyl)-AMP + GDP + phosphate + 2 H(+). The protein operates within purine metabolism; AMP biosynthesis via de novo pathway; AMP from IMP: step 1/2. Plays an important role in the de novo pathway of purine nucleotide biosynthesis. Catalyzes the first committed step in the biosynthesis of AMP from IMP. In Cyanothece sp. (strain PCC 7425 / ATCC 29141), this protein is Adenylosuccinate synthetase.